A 385-amino-acid polypeptide reads, in one-letter code: Spermidine/putrescine import ATP-binding protein PotA (385 aa).

The ABC transporter domain occupies isoleucine 6 to isoleucine 238. Residue glycine 40 to serine 47 participates in ATP binding.

The protein belongs to the ABC transporter superfamily. Spermidine/putrescine importer (TC 3.A.1.11.1) family. In terms of assembly, the complex is composed of two ATP-binding proteins (PotA), two transmembrane proteins (PotB and PotC) and a solute-binding protein (PotD).

It localises to the cell membrane. It catalyses the reaction ATP + H2O + polyamine-[polyamine-binding protein]Side 1 = ADP + phosphate + polyamineSide 2 + [polyamine-binding protein]Side 1.. In terms of biological role, part of the ABC transporter complex PotABCD involved in spermidine/putrescine import. Responsible for energy coupling to the transport system. The polypeptide is Spermidine/putrescine import ATP-binding protein PotA (Streptococcus pneumoniae serotype 4 (strain ATCC BAA-334 / TIGR4)).